The following is a 360-amino-acid chain: Phosphoserine aminotransferase (360 aa).

An L-glutamate-binding site is contributed by R41. Pyridoxal 5'-phosphate is bound by residues 75–76 (GR), W101, T152, D172, and Q195. K196 carries the post-translational modification N6-(pyridoxal phosphate)lysine. A pyridoxal 5'-phosphate-binding site is contributed by 237-238 (NT).

It belongs to the class-V pyridoxal-phosphate-dependent aminotransferase family. SerC subfamily. In terms of assembly, homodimer. The cofactor is pyridoxal 5'-phosphate.

The protein localises to the cytoplasm. It carries out the reaction O-phospho-L-serine + 2-oxoglutarate = 3-phosphooxypyruvate + L-glutamate. It catalyses the reaction 4-(phosphooxy)-L-threonine + 2-oxoglutarate = (R)-3-hydroxy-2-oxo-4-phosphooxybutanoate + L-glutamate. It participates in amino-acid biosynthesis; L-serine biosynthesis; L-serine from 3-phospho-D-glycerate: step 2/3. Its pathway is cofactor biosynthesis; pyridoxine 5'-phosphate biosynthesis; pyridoxine 5'-phosphate from D-erythrose 4-phosphate: step 3/5. Catalyzes the reversible conversion of 3-phosphohydroxypyruvate to phosphoserine and of 3-hydroxy-2-oxo-4-phosphonooxybutanoate to phosphohydroxythreonine. This is Phosphoserine aminotransferase from Pseudoalteromonas translucida (strain TAC 125).